The chain runs to 264 residues: ATP synthase subunit b 1 (264 aa).

Residues 2–22 traverse the membrane as a helical segment; sequence LFDWFTFWAQLLNFLILVWLL. Residues 240-264 are disordered; it reads ASSALLDGPDDEMNEEEGHAGKDAD. Positions 255-264 are enriched in basic and acidic residues; it reads EEGHAGKDAD.

This sequence belongs to the ATPase B chain family. F-type ATPases have 2 components, F(1) - the catalytic core - and F(0) - the membrane proton channel. F(1) has five subunits: alpha(3), beta(3), gamma(1), delta(1), epsilon(1). F(0) has four main subunits: a(1), b(2) and c(10-14). The alpha and beta chains form an alternating ring which encloses part of the gamma chain. F(1) is attached to F(0) by a central stalk formed by the gamma and epsilon chains, while a peripheral stalk is formed by the delta and b chains.

The protein localises to the cell inner membrane. Its function is as follows. F(1)F(0) ATP synthase produces ATP from ADP in the presence of a proton or sodium gradient. F-type ATPases consist of two structural domains, F(1) containing the extramembraneous catalytic core and F(0) containing the membrane proton channel, linked together by a central stalk and a peripheral stalk. During catalysis, ATP synthesis in the catalytic domain of F(1) is coupled via a rotary mechanism of the central stalk subunits to proton translocation. In terms of biological role, component of the F(0) channel, it forms part of the peripheral stalk, linking F(1) to F(0). The protein is ATP synthase subunit b 1 of Chlorobium luteolum (strain DSM 273 / BCRC 81028 / 2530) (Pelodictyon luteolum).